The chain runs to 176 residues: Nucleoside triphosphate/diphosphate phosphatase (176 aa).

The active-site Proton donor is the R23. Residues N87, D103, D105, D107, D120, and E123 each coordinate Mg(2+).

It belongs to the Ntdp family. The cofactor is Mg(2+).

The catalysed reaction is a ribonucleoside 5'-triphosphate + H2O = a ribonucleoside 5'-diphosphate + phosphate + H(+). The enzyme catalyses a ribonucleoside 5'-diphosphate + H2O = a ribonucleoside 5'-phosphate + phosphate + H(+). Functionally, has nucleoside phosphatase activity towards nucleoside triphosphates and nucleoside diphosphates. This chain is Nucleoside triphosphate/diphosphate phosphatase, found in Bacillus cereus (strain B4264).